A 262-amino-acid polypeptide reads, in one-letter code: Small ribosomal subunit protein eS1 (262 aa).

It belongs to the eukaryotic ribosomal protein eS1 family. As to quaternary structure, component of the small ribosomal subunit. Mature ribosomes consist of a small (40S) and a large (60S) subunit. The 40S subunit contains about 33 different proteins and 1 molecule of RNA (18S). The 60S subunit contains about 49 different proteins and 3 molecules of RNA (25S, 5.8S and 5S).

It is found in the cytoplasm. This Plasmodium vivax (strain Salvador I) protein is Small ribosomal subunit protein eS1.